A 168-amino-acid chain; its full sequence is UPF0114 protein PC1_0431 (168 aa).

3 helical membrane-spanning segments follow: residues 15–35 (LLAP…IKFF), 53–73 (LVLV…LVMV), and 136–156 (LMWY…MGYL).

It belongs to the UPF0114 family.

The protein resides in the cell membrane. The polypeptide is UPF0114 protein PC1_0431 (Pectobacterium carotovorum subsp. carotovorum (strain PC1)).